The sequence spans 681 residues: DNA-directed RNA polymerase subunit beta' (681 aa).

The Zn(2+) site is built by Cys69, Cys71, Cys87, and Cys90. Mg(2+) contacts are provided by Asp490, Asp492, and Asp494.

The protein belongs to the RNA polymerase beta' chain family. RpoC1 subfamily. In terms of assembly, in plastids the minimal PEP RNA polymerase catalytic core is composed of four subunits: alpha, beta, beta', and beta''. When a (nuclear-encoded) sigma factor is associated with the core the holoenzyme is formed, which can initiate transcription. Mg(2+) is required as a cofactor. Requires Zn(2+) as cofactor.

The protein resides in the plastid. It is found in the chloroplast. It catalyses the reaction RNA(n) + a ribonucleoside 5'-triphosphate = RNA(n+1) + diphosphate. In terms of biological role, DNA-dependent RNA polymerase catalyzes the transcription of DNA into RNA using the four ribonucleoside triphosphates as substrates. This is DNA-directed RNA polymerase subunit beta' from Liriodendron tulipifera (Tuliptree).